The chain runs to 222 residues: MFRLQLISAFFILLFSLSPVSANFDYFQLVLTWPASFCYPKNKCQRRSNNFTIHGLWPEKKRFRLEFCTGDKYKRFLEEDNIINVLERHWIQMRFDETYANTKQPLWEHEYNRHGICCKNLYDQKAYFLLAMRLKDKLDLLTTLRTHGITPGTKHTFGEIQKAIKTVTSNNDPDLKCVENIKGVMELNEIGICYTPAADRFDRCRHSNTCDETSSTKILFRG.

The N-terminal stretch at 1–22 (MFRLQLISAFFILLFSLSPVSA) is a signal peptide. A disulfide bridge links C38 with C44. N-linked (GlcNAc...) asparagine glycosylation is present at N50. H54 functions as the Proton donor in the catalytic mechanism. RNA contacts are provided by residues H54, 92-93 (QM), 109-110 (HE), and 113-114 (RH). Cystine bridges form between C68–C117, C177–C210, and C193–C204. The active site involves E110. Residue H114 is the Proton acceptor of the active site.

This sequence belongs to the RNase T2 family.

It localises to the secreted. The protein localises to the extracellular space. It catalyses the reaction a ribonucleotidyl-ribonucleotide-RNA + H2O = a 3'-end 3'-phospho-ribonucleotide-RNA + a 5'-end dephospho-ribonucleoside-RNA + H(+). Functionally, self-incompatibility (SI) is the inherited ability of a flowering plant to prevent self-fertilization by discriminating between self and non-self pollen during pollination. In many species, self-incompatibility is controlled by the single, multiallelic locus S. This chain is Ribonuclease S-3 (S3), found in Petunia hybrida (Petunia).